The chain runs to 1755 residues: Transposon Ty1-MR2 Gag-Pol polyprotein (1755 aa).

Composition is skewed to polar residues over residues Met1–Pro10, Thr48–Ser60, and Gln127–Phe152. 3 disordered regions span residues Met1–Gln93, Pro126–Pro173, and Gly352–Thr421. Residues Thr153–Thr165 are compositionally biased toward low complexity. Residues Asn299–His401 are RNA-binding. Over residues Asn402 to Ser418 the composition is skewed to low complexity. Ser416 carries the post-translational modification Phosphoserine. Residue Asp461 is the For protease activity; shared with dimeric partner of the active site. Positions Asn583 to Cys640 are integrase-type zinc finger-like. Positions Asn660 to Pro835 constitute an Integrase catalytic domain. 2 residues coordinate Mg(2+): Asp671 and Asp736. 3 disordered regions span residues Ser956 to Lys1087, Arg1092 to Pro1111, and Asp1130 to Glu1186. The segment covering Ser960–Thr969 has biased composition (low complexity). The segment covering Ser1005–Thr1015 has biased composition (polar residues). The span at Glu1038 to Ser1053 shows a compositional bias: basic and acidic residues. 2 stretches are compositionally biased toward polar residues: residues Tyr1054–Asp1082 and Pro1101–Pro1111. Positions Lys1178–Arg1212 match the Bipartite nuclear localization signal motif. Residues Asn1338–Gln1476 form the Reverse transcriptase Ty1/copia-type domain. 6 residues coordinate Mg(2+): Asp1346, Asp1427, Asp1428, Asp1610, Glu1652, and Asp1685. In terms of domain architecture, RNase H Ty1/copia-type spans Asp1610–Lys1752.

In terms of assembly, the capsid protein forms a homotrimer, from which the VLPs are assembled. The protease is a homodimer, whose active site consists of two apposed aspartic acid residues. Post-translationally, initially, virus-like particles (VLPs) are composed of the structural unprocessed proteins Gag and Gag-Pol, and also contain the host initiator methionine tRNA (tRNA(i)-Met) which serves as a primer for minus-strand DNA synthesis, and a dimer of genomic Ty RNA. Processing of the polyproteins occurs within the particle and proceeds by an ordered pathway, called maturation. First, the protease (PR) is released by autocatalytic cleavage of the Gag-Pol polyprotein yielding capsid protein p45 and a Pol-p154 precursor protein. This cleavage is a prerequisite for subsequent processing of Pol-p154 at the remaining sites to release the mature structural and catalytic proteins. Maturation takes place prior to the RT reaction and is required to produce transposition-competent VLPs.

The protein resides in the cytoplasm. It localises to the nucleus. It carries out the reaction DNA(n) + a 2'-deoxyribonucleoside 5'-triphosphate = DNA(n+1) + diphosphate. The enzyme catalyses Endonucleolytic cleavage to 5'-phosphomonoester.. Its function is as follows. Capsid protein (CA) is the structural component of the virus-like particle (VLP), forming the shell that encapsulates the retrotransposons dimeric RNA genome. The particles are assembled from trimer-clustered units and there are holes in the capsid shells that allow for the diffusion of macromolecules. CA also has nucleocapsid-like chaperone activity, promoting primer tRNA(i)-Met annealing to the multipartite primer-binding site (PBS), dimerization of Ty1 RNA and initiation of reverse transcription. Functionally, the aspartyl protease (PR) mediates the proteolytic cleavages of the Gag and Gag-Pol polyproteins after assembly of the VLP. In terms of biological role, reverse transcriptase/ribonuclease H (RT) is a multifunctional enzyme that catalyzes the conversion of the retro-elements RNA genome into dsDNA within the VLP. The enzyme displays a DNA polymerase activity that can copy either DNA or RNA templates, and a ribonuclease H (RNase H) activity that cleaves the RNA strand of RNA-DNA heteroduplexes during plus-strand synthesis and hydrolyzes RNA primers. The conversion leads to a linear dsDNA copy of the retrotransposon that includes long terminal repeats (LTRs) at both ends. Integrase (IN) targets the VLP to the nucleus, where a subparticle preintegration complex (PIC) containing at least integrase and the newly synthesized dsDNA copy of the retrotransposon must transit the nuclear membrane. Once in the nucleus, integrase performs the integration of the dsDNA into the host genome. This Saccharomyces cerevisiae (strain ATCC 204508 / S288c) (Baker's yeast) protein is Transposon Ty1-MR2 Gag-Pol polyprotein (TY1B-MR2).